Reading from the N-terminus, the 366-residue chain is Anhydro-N-acetylmuramic acid kinase (366 aa).

12 to 19 lines the ATP pocket; it reads GTSLDGID.

Belongs to the anhydro-N-acetylmuramic acid kinase family.

It carries out the reaction 1,6-anhydro-N-acetyl-beta-muramate + ATP + H2O = N-acetyl-D-muramate 6-phosphate + ADP + H(+). Its pathway is amino-sugar metabolism; 1,6-anhydro-N-acetylmuramate degradation. It functions in the pathway cell wall biogenesis; peptidoglycan recycling. Functionally, catalyzes the specific phosphorylation of 1,6-anhydro-N-acetylmuramic acid (anhMurNAc) with the simultaneous cleavage of the 1,6-anhydro ring, generating MurNAc-6-P. Is required for the utilization of anhMurNAc either imported from the medium or derived from its own cell wall murein, and thus plays a role in cell wall recycling. The protein is Anhydro-N-acetylmuramic acid kinase of Nitrosospira multiformis (strain ATCC 25196 / NCIMB 11849 / C 71).